A 160-amino-acid chain; its full sequence is D-aminoacyl-tRNA deacylase (160 aa).

The short motif at 146 to 147 is the Gly-cisPro motif, important for rejection of L-amino acids element; sequence GP.

Belongs to the DTD family. Homodimer.

It is found in the cytoplasm. It catalyses the reaction glycyl-tRNA(Ala) + H2O = tRNA(Ala) + glycine + H(+). It carries out the reaction a D-aminoacyl-tRNA + H2O = a tRNA + a D-alpha-amino acid + H(+). Functionally, an aminoacyl-tRNA editing enzyme that deacylates mischarged D-aminoacyl-tRNAs. Also deacylates mischarged glycyl-tRNA(Ala), protecting cells against glycine mischarging by AlaRS. Acts via tRNA-based rather than protein-based catalysis; rejects L-amino acids rather than detecting D-amino acids in the active site. By recycling D-aminoacyl-tRNA to D-amino acids and free tRNA molecules, this enzyme counteracts the toxicity associated with the formation of D-aminoacyl-tRNA entities in vivo and helps enforce protein L-homochirality. The chain is D-aminoacyl-tRNA deacylase from Desulfovibrio desulfuricans (strain ATCC 27774 / DSM 6949 / MB).